A 3303-amino-acid chain; its full sequence is Protein unc-80 homolog (3303 aa).

Over residues 1 to 37 (MVTNAAGTAATGGATSNTTNNNNLQTNNNSHGANNNN) the composition is skewed to low complexity. The disordered stretch occupies residues 1–43 (MVTNAAGTAATGGATSNTTNNNNLQTNNNSHGANNNNDDFDFD). The helical transmembrane segment at 202–222 (LFSVPTITLFVYLFAPIIHHL) threads the bilayer. Disordered regions lie at residues 284–316 (LSAD…VSSP), 361–422 (LQQQ…SESI), 491–512 (LYQG…KDYI), 526–546 (AEEP…KKKR), 1036–1067 (FRRR…SERN), 1443–1563 (LHEP…DDTA), and 1627–1671 (VEPT…KDRI). A compositionally biased stretch (low complexity) spans 361–377 (LQQQQSQSRRGSRQSMN). Basic and acidic residues-rich tracts occupy residues 378–391 (SRDK…KFEF) and 401–422 (SMKE…SESI). Residues 495–505 (PGSNSRDSPGS) are compositionally biased toward polar residues. Polar residues predominate over residues 1058 to 1067 (SDSTSSSERN). A compositionally biased stretch (basic residues) spans 1490–1499 (FKRRSLKLRR). A compositionally biased stretch (polar residues) spans 1546–1556 (DDQQPESPTDS). The segment covering 1660–1671 (KRKDSLSRKDRI) has biased composition (basic and acidic residues). A run of 3 helical transmembrane segments spans residues 1969–1989 (VYEI…ALFL), 2018–2038 (LPQQ…MFYV), and 2048–2068 (LVGS…GIMF). Disordered stretches follow at residues 2518-2550 (NGPY…FEEE), 3003-3158 (EEKR…FKAQ), and 3170-3262 (FRHS…YRDN). The span at 3003-3018 (EEKRYDRESSEQKKSD) shows a compositional bias: basic and acidic residues. 2 stretches are compositionally biased toward polar residues: residues 3033–3053 (QRPS…SHSH) and 3071–3106 (PSDT…SQSG). Over residues 3124–3134 (SGHGSGGGIGT) the composition is skewed to gly residues. Positions 3135–3152 (GAASAVPSHLSHSQSLQQ) are enriched in low complexity. Over residues 3198-3217 (SRLQRSKAASRKTFRLKRSR) the composition is skewed to basic residues. Residues 3226–3239 (IVTSQEEQAPQAQA) show a composition bias toward polar residues. Residues 3246–3257 (SWDSVSQTSSTS) show a composition bias toward low complexity.

The protein belongs to the unc-80 family. In terms of assembly, interacts with unc79 and na. Can interact with unc79 independently of na.

It localises to the membrane. In terms of biological role, component of the na (narrow abdomen) sodium channel complex. In the circadian clock neurons it functions with na and unc79 to promote circadian rhythmicity. The protein is Protein unc-80 homolog of Drosophila melanogaster (Fruit fly).